The primary structure comprises 381 residues: Metacaspase-8 (381 aa).

Active-site residues include His86 and Cys140. Residue Cys140 is modified to S-nitrosocysteine.

The protein belongs to the peptidase C14B family. Proteolytically processed; by an autocatalytic mechanism.

In terms of biological role, cysteine protease that cleaves specifically after arginine residues. Does not cleave caspase-specific substrates. May be involved in the modulation of programmed cell death activated by oxidative stress. This Arabidopsis thaliana (Mouse-ear cress) protein is Metacaspase-8 (AMC8).